The sequence spans 398 residues: Chalcone synthase (398 aa).

Residue Cys169 is part of the active site.

It belongs to the thiolase-like superfamily. Chalcone/stilbene synthases family.

It catalyses the reaction (E)-4-coumaroyl-CoA + 3 malonyl-CoA + 3 H(+) = 2',4,4',6'-tetrahydroxychalcone + 3 CO2 + 4 CoA. It functions in the pathway secondary metabolite biosynthesis; flavonoid biosynthesis. Its function is as follows. The primary product of this enzyme is 4,2',4',6'-tetrahydroxychalcone (also termed naringenin-chalcone or chalcone) which can under specific conditions spontaneously isomerize into naringenin. This Petroselinum crispum (Parsley) protein is Chalcone synthase (CHS).